A 369-amino-acid polypeptide reads, in one-letter code: Glutamine synthetase 2 cytoplasmic (369 aa).

The 81-residue stretch at 32-112 (VQATYVWIDG…VMCDTYKFDG (81 aa)) folds into the GS beta-grasp domain. Residues 119 to 369 (KRKTCLEVAN…AILRTICLDE (251 aa)) form the GS catalytic domain.

This sequence belongs to the glutamine synthetase family. In terms of assembly, homooctamer.

It is found in the cytoplasm. It catalyses the reaction L-glutamate + NH4(+) + ATP = L-glutamine + ADP + phosphate + H(+). This is Glutamine synthetase 2 cytoplasmic (Gs2) from Drosophila melanogaster (Fruit fly).